The primary structure comprises 283 residues: Pantothenate synthetase 1 (283 aa).

30–37 contacts ATP; it reads MGYLHDGH. H37 (proton donor) is an active-site residue. Q61 serves as a coordination point for (R)-pantoate. Q61 contacts beta-alanine. 147-150 is an ATP binding site; the sequence is GQKD. Q153 serves as a coordination point for (R)-pantoate. ATP-binding positions include V176 and 184 to 187; that span reads MSSR.

It belongs to the pantothenate synthetase family. As to quaternary structure, homodimer.

The protein resides in the cytoplasm. The enzyme catalyses (R)-pantoate + beta-alanine + ATP = (R)-pantothenate + AMP + diphosphate + H(+). It functions in the pathway cofactor biosynthesis; (R)-pantothenate biosynthesis; (R)-pantothenate from (R)-pantoate and beta-alanine: step 1/1. In terms of biological role, catalyzes the condensation of pantoate with beta-alanine in an ATP-dependent reaction via a pantoyl-adenylate intermediate. This chain is Pantothenate synthetase 1, found in Bradyrhizobium diazoefficiens (strain JCM 10833 / BCRC 13528 / IAM 13628 / NBRC 14792 / USDA 110).